The primary structure comprises 649 residues: Transmembrane and coiled-coil domains protein 1 (649 aa).

Met-1 is subject to N-acetylmethionine. Disordered regions lie at residues 1 to 37, 58 to 83, 110 to 166, and 197 to 222; these read MEPSGSEQLYEDPDPGGKSQDAEARRQTESEQKLSKM, HQRRRSSVSPHDVQQIQTDPEPEVDL, RVPP…PTSS, and LAQTSSAVASSTDGSIHTESVDGIPD. At 1–587 the chain is on the cytoplasmic side; the sequence is MEPSGSEQLY…ARNLLGKLIN (587 aa). Over residues 20 to 34 the composition is skewed to basic and acidic residues; that stretch reads QDAEARRQTESEQKL. The segment covering 64–75 has biased composition (polar residues); sequence SVSPHDVQQIQT. The segment covering 113–125 has biased composition (basic residues); that stretch reads PKMKRGTSLHSRR. A compositionally biased stretch (low complexity) spans 156–166; sequence SSSTTDAPTSS. Over residues 197–214 the composition is skewed to polar residues; the sequence is LAQTSSAVASSTDGSIHT. Positions 224-310 form a coiled coil; that stretch reads QRTKAAIAHL…KLREVEQNGI (87 aa). A phosphoserine mark is found at Ser-378 and Ser-410. The segment at 411-433 is disordered; it reads PKYGSEEDCSSATSGSVGANSTT. The segment covering 420-433 has biased composition (polar residues); the sequence is SSATSGSVGANSTT. Residues 457–566 adopt a coiled-coil conformation; that stretch reads ALLHEVQEIR…KMELQQQQQQ (110 aa). The next 2 helical transmembrane spans lie at 588 to 608 and 621 to 641; these read ILLAVMAVLLVFVSTVANCVV and LFLVAFIAFLWKHWDALFSYV. Topologically, residues 642–649 are cytoplasmic; it reads DRLFSPPR.

It belongs to the TEX28 family. May form homodimers and heterodimers with TMCC2 or TMCC3 via the coiled-coil domains. Interacts with ribosomal proteins RPL4 and RPS6.

Its subcellular location is the endoplasmic reticulum membrane. Its function is as follows. Endoplasmic reticulum membrane protein that promotes endoplasmic reticulum-associated endosome fission. Localizes to contact sites between the endoplasmic reticulum and endosomes and acts by promoting recruitment of the endoplasmic reticulum to endosome tubules for fission. Endosome membrane fission of early and late endosomes is essential to separate regions destined for lysosomal degradation from carriers to be recycled to the plasma membrane. In Mus musculus (Mouse), this protein is Transmembrane and coiled-coil domains protein 1 (Tmcc1).